The primary structure comprises 948 residues: Probable disease resistance protein At5g47260 (948 aa).

Residues 20–57 (RKYLYNLERNLEALHKVMQDLNAMRNDLLKRLSKEEEI) are a coiled coil. In terms of domain architecture, NB-ARC spans 134-432 (HRALPPLVIK…CEGILAKEDR (299 aa)). 176–183 (GRGGVGKT) is a binding site for ATP. LRR repeat units lie at residues 498 to 519 (MIRR…PQCS), 520 to 542 (ELTT…FFQW), 545 to 567 (GLVV…VSSL), 569 to 591 (LLRF…KELK), 592 to 614 (SLIH…ASLL), 615 to 636 (NLQV…EDIQ), 640 to 661 (SLKE…LSIQ), 666 to 686 (SIRR…LSLN), and 690 to 711 (SLCE…WRCT).

It belongs to the disease resistance NB-LRR family.

Potential disease resistance protein. The polypeptide is Probable disease resistance protein At5g47260 (Arabidopsis thaliana (Mouse-ear cress)).